A 275-amino-acid chain; its full sequence is MDTILVFSLIIASYDANKKDLRDSSCRLEQLPGIFPKDVRSIRELQMQETHTETKRTTFIQNRTIATLQCLGSDSKVKVNLVYLERRPKVKHILKNLRIIAAPRRNSSASSSCHLIPTSKFQTGSLLKGKAFLPGISQCKVLGASSETFPTTAPSITPGNKEGEKTTSTDTDENLEKRQKWSIVVKILIAVTLLLSGVAIIVFVIFEVPCPYQCLGARKLCQCQWLWRWQKKGGQPPGTAESKPDSQPQKVGQDAANSSNPKKAAEITVIHQTYF.

Residues 148-158 (TFPTTAPSITP) show a composition bias toward polar residues. Positions 148–173 (TFPTTAPSITPGNKEGEKTTSTDTDE) are disordered. A helical transmembrane segment spans residues 187 to 207 (ILIAVTLLLSGVAIIVFVIFE). Residues 234–264 (GQPPGTAESKPDSQPQKVGQDAANSSNPKKA) are disordered. Polar residues predominate over residues 245-261 (DSQPQKVGQDAANSSNP).

Its subcellular location is the membrane. This is an uncharacterized protein from Homo sapiens (Human).